The primary structure comprises 332 residues: UPF0194 membrane protein YbhG (332 aa).

Residues Met-1–Tyr-26 form the signal peptide. Residues Glu-108–Ala-209 are a coiled coil.

It belongs to the UPF0194 family.

The protein resides in the periplasm. The sequence is that of UPF0194 membrane protein YbhG (ybhG) from Shigella sonnei (strain Ss046).